The primary structure comprises 199 residues: Pathogenesis-related 5 protein Cup a 3 (199 aa).

8 disulfide bridges follow: Cys9-Cys198, Cys50-Cys60, Cys65-Cys71, Cys113-Cys187, Cys118-Cys171, Cys126-Cys136, Cys140-Cys149, and Cys150-Cys158.

The protein belongs to the thaumatin family. As to expression, expressed in pollen.

It is found in the secreted. The protein resides in the extracellular space. The protein localises to the extracellular matrix. Its subcellular location is the pollen coat. It localises to the cytoplasm. It is found in the nucleus. The protein resides in the mitochondrion. The protein localises to the endoplasmic reticulum. Its subcellular location is the golgi apparatus. It localises to the golgi stack. It is found in the vesicle. The protein resides in the vacuole. The chain is Pathogenesis-related 5 protein Cup a 3 from Hesperocyparis arizonica (Arizona cypress).